Here is a 78-residue protein sequence, read N- to C-terminus: Small venom protein 2 (78 aa).

The first 19 residues, 1–19 (MKFIVLLGALLALLVAVSA), serve as a signal peptide directing secretion. A propeptide spanning residues 20-42 (DRIAREAPEMESVDEAVLTRQAR) is cleaved from the precursor.

In terms of tissue distribution, expressed by the venom gland.

Its subcellular location is the secreted. This is Small venom protein 2 from Pimpla hypochondriaca (Parasitoid wasp).